We begin with the raw amino-acid sequence, 293 residues long: Chorion protein S36 (293 aa).

The N-terminal stretch at 1–20 is a signal peptide; sequence MQLGLWFGLFAVAAAPLVSA. The span at 235-253 shows a compositional bias: polar residues; the sequence is QSYGQPQAYNQPQAYSQPQ. The tract at residues 235-293 is disordered; it reads QSYGQPQAYNQPQAYSQPQSYGNSGSSGAGNSGPSSDSYAAGAETPLYASPAPYGSPSY.

This sequence belongs to the chorion protein S36 family.

It is found in the secreted. In terms of biological role, chorion membrane (egg shell) protein; protects the egg from the environment. The sequence is that of Chorion protein S36 (Cp36) from Drosophila virilis (Fruit fly).